Reading from the N-terminus, the 438-residue chain is UDP-N-acetylmuramoylalanine--D-glutamate ligase (438 aa).

An ATP-binding site is contributed by 112–118 (GSNGKST).

It belongs to the MurCDEF family.

The protein localises to the cytoplasm. It carries out the reaction UDP-N-acetyl-alpha-D-muramoyl-L-alanine + D-glutamate + ATP = UDP-N-acetyl-alpha-D-muramoyl-L-alanyl-D-glutamate + ADP + phosphate + H(+). It participates in cell wall biogenesis; peptidoglycan biosynthesis. In terms of biological role, cell wall formation. Catalyzes the addition of glutamate to the nucleotide precursor UDP-N-acetylmuramoyl-L-alanine (UMA). The chain is UDP-N-acetylmuramoylalanine--D-glutamate ligase from Salmonella typhimurium (strain LT2 / SGSC1412 / ATCC 700720).